A 1135-amino-acid polypeptide reads, in one-letter code: Potassium channel subfamily T member 2 (1135 aa).

Residues 1 to 63 are Cytoplasmic-facing; that stretch reads MVDLESEVPP…KNQRSSLRIR (63 aa). Residues 64–84 traverse the membrane as a helical segment; that stretch reads LFNFSLKLLSCLLYIIRVLLE. Residues 85–101 lie on the Extracellular side of the membrane; that stretch reads KPSQGSEWSHIFWVNRS. A helical membrane pass occupies residues 102 to 122; the sequence is LPLWGLQVSVALISLFETILL. The Cytoplasmic segment spans residues 123–137; that stretch reads GYLSYKGNIWEQILR. The chain crosses the membrane as a helical span at residues 138-158; it reads IPFILEIINAVPFIISIFWPT. Residues 159–164 lie on the Extracellular side of the membrane; that stretch reads LRNLFV. A helical transmembrane segment spans residues 165-185; the sequence is PVFLNCWLAKHALENMINDLH. At 186–198 the chain is on the cytoplasmic side; the sequence is RAIQRTQSAMFNQ. Residues 199-219 form a helical membrane-spanning segment; sequence VLILISTLLCLIFTCICGIQH. Over 220-228 the chain is Extracellular; the sequence is LERIGKKLN. Residues 229 to 249 constitute an intramembrane region (pore-forming); it reads LFDSLYFCIVTFSTVGFGDVT. The Extracellular portion of the chain corresponds to 250 to 256; sequence PETWSSK. A helical membrane pass occupies residues 257 to 277; it reads LFVVAMICVALVVLPIQFEQL. The Cytoplasmic segment spans residues 278–1135; that stretch reads AYLWMERQKS…VQDSREETQL (858 aa). 2 consecutive RCK N-terminal domains span residues 299-435 and 718-858; these read EKHV…DHVV and NKLI…CYSL. 2 disordered regions span residues 982-1036 and 1111-1135; these read DTKD…AEKI and PNSE…ETQL. A compositionally biased stretch (basic residues) spans 1010–1030; that stretch reads LRRKSMQWARRLSRKGPKHSG. The span at 1111-1122 shows a compositional bias: polar residues; sequence PNSEPSRKNSIC.

It belongs to the potassium channel family. Calcium-activated (TC 1.A.1.3) subfamily. KCa4.2/KCNT2 sub-subfamily. In terms of assembly, homotetramer. Forms heteromeric channels with KCNT1. These heterodimer channels differ from the homomers in their unitary conductance, kinetic behavior, subcellular localization, and response to activation of protein kinase C. In terms of processing, phosphorylated by protein kinase C. Phosphorylation of the C-terminal domain inhibits channel activity. As to expression, within the dorsal root ganglia (DRGs), exclusively expressed in small-sized and medium-sized calcitonin gene-related peptide (CGRP)-containing DRG neurons.

The protein resides in the cell membrane. It carries out the reaction K(+)(in) = K(+)(out). With respect to regulation, are normally in a closed state unless activated by an increase in intracellular Na(+) and Cl(-). Inhibited upon stimulation of G-protein coupled receptors, such as CHRM1 and GRM1. There is conflicting data about the effect of ATP on KNCT2 channels activity. Intracellular ATP was initially report to inhibit the channel activity. However, others studies conclude that KNCT2 channels are not inhibited by intracellular ATP. Functionally, sodium-activated and chloride-activated potassium channel. Produces rapidly activating outward rectifier K(+) currents. Contributes to regulate neuronal excitability. The sequence is that of Potassium channel subfamily T member 2 (Kcnt2) from Mus musculus (Mouse).